The sequence spans 608 residues: Developmental regulatory protein wetA (608 aa).

7 disordered regions span residues alanine 54–threonine 88, valine 102–arginine 125, valine 146–lysine 186, serine 202–arginine 226, tryptophan 309–proline 352, alanine 447–glycine 544, and leucine 556–alanine 576. 3 stretches are compositionally biased toward low complexity: residues glutamate 77–threonine 88, proline 107–serine 119, and serine 163–serine 175. The span at glutamine 313–proline 338 shows a compositional bias: basic residues. Composition is skewed to low complexity over residues histidine 339–alanine 350 and serine 502–glycine 517.

The protein belongs to the wetA family.

Functionally, abaA and wetA are pivotal regulators of conidiophore development and conidium maturation. They act individually and together to regulate their own expression and that of numerous other sporulation-specific genes. Functions to maintain conidial dormancy by suppressing microcycle conidiation. The sequence is that of Developmental regulatory protein wetA from Gibberella zeae (strain ATCC MYA-4620 / CBS 123657 / FGSC 9075 / NRRL 31084 / PH-1) (Wheat head blight fungus).